We begin with the raw amino-acid sequence, 250 residues long: Anaphase-promoting complex subunit DOC1 (250 aa).

The region spanning 60 to 246 is the DOC domain; the sequence is PTPENLQHMF…LPETNNVFQD (187 aa).

Belongs to the APC10 family. The APC/C is composed of at least 13 subunits that stay tightly associated throughout the cell cycle: APC1, APC2, APC4, APC5, APC9, APC11, CDC16, CDC23, CDC26, CDC27, DOC1, MND2 and SWM1.

The protein resides in the cytoplasm. It is found in the nucleus. Its pathway is protein modification; protein ubiquitination. Component of the anaphase promoting complex/cyclosome (APC/C), a cell cycle-regulated E3 ubiquitin-protein ligase complex that controls progression through mitosis and the G1 phase of the cell cycle. The APC/C is thought to confer substrate specificity and, in the presence of ubiquitin-conjugating E2 enzymes, it catalyzes the formation of protein-ubiquitin conjugates that are subsequently degraded by the 26S proteasome. In early mitosis, the APC/C is activated by CDC20 and targets securin PDS1, the B-type cyclin CLB5, and other anaphase inhibitory proteins for proteolysis, thereby triggering the separation of sister chromatids at the metaphase-to-anaphase transition. In late mitosis and in G1, degradation of CLB5 allows activation of the APC/C by CDH1, which is needed to destroy CDC20 and the B-type cyclin CLB2 to allow exit from mitosis and creating the low CDK state necessary for cytokinesis and for reforming prereplicative complexes in G1 prior to another round of replication. DOC1 is required, together with the coactivators CDH1 and CDC20, for recognition and binding of the substrates. This chain is Anaphase-promoting complex subunit DOC1 (DOC1), found in Saccharomyces cerevisiae (strain ATCC 204508 / S288c) (Baker's yeast).